A 365-amino-acid chain; its full sequence is 3-dehydroquinate synthase (365 aa).

NAD(+) contacts are provided by residues 69–74 (DGEAHK), 103–107 (GVIGD), 127–128 (TT), K140, and K149. E182, H245, and H262 together coordinate Zn(2+).

The protein belongs to the sugar phosphate cyclases superfamily. Dehydroquinate synthase family. Co(2+) serves as cofactor. It depends on Zn(2+) as a cofactor. The cofactor is NAD(+).

The protein localises to the cytoplasm. It catalyses the reaction 7-phospho-2-dehydro-3-deoxy-D-arabino-heptonate = 3-dehydroquinate + phosphate. Its pathway is metabolic intermediate biosynthesis; chorismate biosynthesis; chorismate from D-erythrose 4-phosphate and phosphoenolpyruvate: step 2/7. In terms of biological role, catalyzes the conversion of 3-deoxy-D-arabino-heptulosonate 7-phosphate (DAHP) to dehydroquinate (DHQ). In Pseudomonas putida (strain ATCC 700007 / DSM 6899 / JCM 31910 / BCRC 17059 / LMG 24140 / F1), this protein is 3-dehydroquinate synthase.